We begin with the raw amino-acid sequence, 83 residues long: UPF0270 protein CGSHiEE_07180 (83 aa).

It belongs to the UPF0270 family.

The sequence is that of UPF0270 protein CGSHiEE_07180 from Haemophilus influenzae (strain PittEE).